The chain runs to 286 residues: Merozoite surface protein 2 (286 aa).

The N-terminal stretch at methionine 1–isoleucine 20 is a signal peptide. Residues asparagine 22 and asparagine 36 are each glycosylated (N-linked (GlcNAc...) asparagine). The interval methionine 43–lysine 248 is disordered. The tract at residues threonine 44–serine 212 is polymorphic region. Positions alanine 54–alanine 68 are enriched in gly residues. Repeat 1 spans residues serine 59–alanine 68. The 5 X 10 AA tandem repeats of S-G-S-A-[GS]-[GS]-[AD]-G-A stretch occupies residues serine 59–alanine 106. Residues serine 69–alanine 76 form a 2; partial repeat. The span at serine 69 to asparagine 137 shows a compositional bias: low complexity. A run of 3 repeats spans residues serine 77 to alanine 86, glycine 88 to alanine 96, and serine 97 to alanine 106. Polar residues-rich tracts occupy residues lysine 153–proline 179 and lysine 186–proline 214. An N-linked (GlcNAc...) asparagine glycan is attached at asparagine 163. Asparagine 235 carries an N-linked (GlcNAc...) asparagine glycan. The span at serine 239–lysine 248 shows a compositional bias: basic and acidic residues. Cysteines 243 and 251 form a disulfide. N-linked (GlcNAc...) asparagine glycans are attached at residues asparagine 259 and asparagine 260. The GPI-anchor amidated asparagine moiety is linked to residue asparagine 260. Positions serine 261–isoleucine 286 are cleaved as a propeptide — removed in mature form.

It localises to the cell membrane. In terms of biological role, may play a role in the merozoite attachment to the erythrocyte. The chain is Merozoite surface protein 2 from Plasmodium falciparum (isolate 311).